We begin with the raw amino-acid sequence, 601 residues long: Glutamine--fructose-6-phosphate aminotransferase [isomerizing] (601 aa).

Cysteine 2 acts as the Nucleophile; for GATase activity in catalysis. The region spanning 2–218 is the Glutamine amidotransferase type-2 domain; sequence CGIVGYIGYD…DHEIVIVKKD (217 aa). SIS domains are found at residues 284 to 423 and 453 to 591; these read IIND…EHGR and IATD…VDKP. Catalysis depends on lysine 596, which acts as the For Fru-6P isomerization activity.

As to quaternary structure, homodimer.

It localises to the cytoplasm. It catalyses the reaction D-fructose 6-phosphate + L-glutamine = D-glucosamine 6-phosphate + L-glutamate. In terms of biological role, catalyzes the first step in hexosamine metabolism, converting fructose-6P into glucosamine-6P using glutamine as a nitrogen source. The polypeptide is Glutamine--fructose-6-phosphate aminotransferase [isomerizing] (Staphylococcus aureus (strain COL)).